Here is a 280-residue protein sequence, read N- to C-terminus: MGRAELLGGNMSTQDPSELWGRADGGTDLLQDLGWYHGNLTRHAAEALLLSNGRDGSYLLRDSNEQTGLYSLSVRAKDSVKHFHVEYTGYSFKFGFNEYSSLKDFVKHFANQPLIGSETGTLMVLKHPYPREVEEPCIYESVRVHTAMQTGRTENDLVPTAPSLGTKEGYLTKQGGLVKTWKTRWFTLQRNELKYFKDQMSPEPIRILDLTECSAVQFDYSQERVNCFCLVFPFRTFYLCAKTGVEADEWIKILRWKLSKIRKQLDQGEDTVRSRSFIFK.

The 95-residue stretch at 35–129 folds into the SH2 domain; it reads WYHGNLTRHA…GTLMVLKHPY (95 aa). A Phosphotyrosine modification is found at Tyr139. Ser141 is modified (phosphoserine). One can recognise a PH domain in the interval 164 to 259; sequence LGTKEGYLTK…WIKILRWKLS (96 aa).

Interacts with PtdIns(3,4,5)P3 and PLCG2. Phosphorylated on tyrosine residues.

Its subcellular location is the cytoplasm. The protein resides in the membrane. Its function is as follows. May act as a B-cell-associated adapter that regulates B-cell antigen receptor (BCR)-signaling downstream of PI3K. The protein is Dual adapter for phosphotyrosine and 3-phosphotyrosine and 3-phosphoinositide (Dapp1) of Mus musculus (Mouse).